The primary structure comprises 132 residues: Small ribosomal subunit protein uS8 (132 aa).

This sequence belongs to the universal ribosomal protein uS8 family. Part of the 30S ribosomal subunit. Contacts proteins S5 and S12.

Its function is as follows. One of the primary rRNA binding proteins, it binds directly to 16S rRNA central domain where it helps coordinate assembly of the platform of the 30S subunit. The polypeptide is Small ribosomal subunit protein uS8 (Psychrobacter cryohalolentis (strain ATCC BAA-1226 / DSM 17306 / VKM B-2378 / K5)).